Reading from the N-terminus, the 209-residue chain is Large ribosomal subunit protein bL25 (209 aa).

The disordered stretch occupies residues 185 to 209 (SKATTGEEEGAEAAGEGEEAEEKPE). A compositionally biased stretch (acidic residues) spans 190-209 (GEEEGAEAAGEGEEAEEKPE).

The protein belongs to the bacterial ribosomal protein bL25 family. CTC subfamily. In terms of assembly, part of the 50S ribosomal subunit; part of the 5S rRNA/L5/L18/L25 subcomplex. Contacts the 5S rRNA. Binds to the 5S rRNA independently of L5 and L18.

Functionally, this is one of the proteins that binds to the 5S RNA in the ribosome where it forms part of the central protuberance. The polypeptide is Large ribosomal subunit protein bL25 (Syntrophomonas wolfei subsp. wolfei (strain DSM 2245B / Goettingen)).